Consider the following 472-residue polypeptide: Violaxanthin de-epoxidase, chloroplastic (472 aa).

6 disulfide bridges follow: Cys-133-Cys-151, Cys-138-Cys-145, Cys-157-Cys-174, Cys-161-Cys-170, Cys-189-Cys-196, and Cys-242-Cys-372. A coiled-coil region spans residues Val-379–Phe-462.

The protein belongs to the calycin superfamily. Lipocalin family. In terms of processing, disulfide bonds. Reduction of the disulfides results in loss of a rigid structure, a decrease in thermal stability of 15 degrees Celsius and a loss of activity.

It localises to the plastid. The protein resides in the chloroplast thylakoid membrane. The enzyme catalyses all-trans-violaxanthin + 2 L-ascorbate = all-trans-zeaxanthin + 2 L-dehydroascorbate + 2 H2O. With respect to regulation, irreversibly inhibited by DTT and iodoacetamide at pH 5.7 or pH 5.2, but not at pH 7.2. Regulated through Ca(2+) gating of H(+) flux at the CFoH(+) channel. Requires the presence of lipids forming reverse hexagonal structures such as monogalactosyldiacylglyceride (MGDG) or phosphatidylethanolamine. A negative curvature elastic stress in the thylakoid lipid bilayer is required for VDE1 activity. In terms of biological role, part of the xanthophyll (or violaxanthin) cycle for controlling the concentration of zeaxanthin in chloroplasts. Catalyzes the two-step mono de-epoxidation reaction. Stereospecific for all-trans xanthophylls. Zeaxanthin induces the dissipation of excitation energy in the chlorophyll of the light-harvesting protein complex of photosystem II. This Spinacia oleracea (Spinach) protein is Violaxanthin de-epoxidase, chloroplastic.